The following is a 343-amino-acid chain: Anthranilate phosphoribosyltransferase (343 aa).

Residues Gly-84, 87–88 (GD), Thr-92, 94–97 (NIST), 112–120 (KHGNRGVSS), and Ser-124 each bind 5-phospho-alpha-D-ribose 1-diphosphate. Gly-84 is an anthranilate binding site. Residue Ser-96 participates in Mg(2+) binding. Residue Asn-115 participates in anthranilate binding. Arg-170 is an anthranilate binding site. Mg(2+) contacts are provided by Asp-229 and Glu-230.

It belongs to the anthranilate phosphoribosyltransferase family. Homodimer. Requires Mg(2+) as cofactor.

It carries out the reaction N-(5-phospho-beta-D-ribosyl)anthranilate + diphosphate = 5-phospho-alpha-D-ribose 1-diphosphate + anthranilate. The protein operates within amino-acid biosynthesis; L-tryptophan biosynthesis; L-tryptophan from chorismate: step 2/5. Its function is as follows. Catalyzes the transfer of the phosphoribosyl group of 5-phosphorylribose-1-pyrophosphate (PRPP) to anthranilate to yield N-(5'-phosphoribosyl)-anthranilate (PRA). The chain is Anthranilate phosphoribosyltransferase from Burkholderia ambifaria (strain MC40-6).